Here is a 107-residue protein sequence, read N- to C-terminus: Cytochrome c oxidase assembly protein COX16 homolog, mitochondrial (107 aa).

Residues 1–14 are Mitochondrial matrix-facing; that stretch reads MFGYAVRRALRKSK. A helical membrane pass occupies residues 15–37; the sequence is TLRYGVPMLLLIVGGSFGLREFS. Residues 38–107 lie on the Mitochondrial intermembrane side of the membrane; that stretch reads QIRYDAVKIK…PEILKTNKTT (70 aa). A disordered region spans residues 80–107; the sequence is NIRGPRPWEDPDLLQGRNPEILKTNKTT.

This sequence belongs to the COX16 family. Associates with the MITRAC complex. Interacts with MT-CO2/COX; specifically interacts with newly synthesized MT-CO2/COX. Interacts with SCO1, SCO2 and COA6.

It localises to the mitochondrion inner membrane. Required for the assembly of the mitochondrial respiratory chain complex IV (CIV), also known as cytochrome c oxidase. Promotes the insertion of copper into the active site of cytochrome c oxidase subunit II (MT-CO2/COX2). Interacts specifically with newly synthesized MT-CO2/COX and its copper center-forming metallochaperones SCO1, SCO2 and COA6. Probably facilitates MT-CO2/COX2 association with the MITRAC assembly intermediate containing MT-CO1/COX1, thereby participating in merging the MT-CO1/COX1 and MT-CO2/COX2 assembly lines. This is Cytochrome c oxidase assembly protein COX16 homolog, mitochondrial from Bos taurus (Bovine).